The primary structure comprises 490 residues: Cheilanthifoline synthase (490 aa).

The helical transmembrane segment at 2 to 22 (EESLWVVTATVVVVFAIAKLL) threads the bilayer. Cys432 is a heme binding site.

The protein belongs to the cytochrome P450 family. The cofactor is heme. Expressed in roots. Detected in leaves and stems.

The protein resides in the endoplasmic reticulum membrane. It carries out the reaction (S)-scoulerine + reduced [NADPH--hemoprotein reductase] + O2 = (S)-cheilanthifoline + oxidized [NADPH--hemoprotein reductase] + 2 H2O + H(+). The protein operates within alkaloid biosynthesis. Functionally, methylenedioxy bridge-forming cytochrome P450 involved in the biosynthesis of isoquinoline alkaloids. Converts (S)-scoulerine into (R,S)-cheilanthifoline. Catalyzes an oxidative reaction that does not incorporate oxygen into the product. The protein is Cheilanthifoline synthase (CYP719A5) of Eschscholzia californica (California poppy).